The sequence spans 369 residues: MSSSRKRLGVFTSGGDCPGLNTAIRAIVAHATLSYGWEVLGILHATQGLIERKAIPLNAEGLGGMDVLLNMGGTILGAINKGDTLGHADEVIAGYYELGLDALIAICGDGSLRILHQLAQKGNWNFLAIPKTIDNDVALTDRAIGFDTAVNTVVEALNRITSTAASHDRVFVVEVMGRTAGHLALYSGIAGGADIILIPEIPYSIEGICQHLQKLRDRWGRQFALIVVAEGSKQLEEDANHPRHCSIGQYIADKIAQHSPIPIELRVSVLGHIQRGGAPMAMDRLLAAGMGNTAVDLAAQGTFGRMVAWQAGQVVTVPIADVVAKCPRHVDPNSFLIRTAQGLGIYVGDKPMLPYVDPTLCRDQVICAI.

ATP is bound by residues glycine 15, 81–82 (KG), and 108–111 (GDGS). Residue aspartate 109 coordinates Mg(2+). Substrate-binding positions include 132-134 (TID), arginine 169, 176-178 (MGR), glutamate 230, arginine 266, and 272-275 (HIQR). The active-site Proton acceptor is aspartate 134.

Belongs to the phosphofructokinase type A (PFKA) family. Mixed-substrate PFK group III subfamily. In terms of assembly, homodimer or homotetramer. Mg(2+) serves as cofactor.

It is found in the cytoplasm. The enzyme catalyses beta-D-fructose 6-phosphate + ATP = beta-D-fructose 1,6-bisphosphate + ADP + H(+). It functions in the pathway carbohydrate degradation; glycolysis; D-glyceraldehyde 3-phosphate and glycerone phosphate from D-glucose: step 3/4. Catalyzes the phosphorylation of D-fructose 6-phosphate to fructose 1,6-bisphosphate by ATP, the first committing step of glycolysis. This is ATP-dependent 6-phosphofructokinase from Thermosynechococcus vestitus (strain NIES-2133 / IAM M-273 / BP-1).